Here is a 261-residue protein sequence, read N- to C-terminus: 14-3-3-like protein B (261 aa).

Residues 237-261 (DIPEDGEDSQKANGTAKFGGGDDAE) form a disordered region.

Belongs to the 14-3-3 family.

This is 14-3-3-like protein B from Vicia faba (Broad bean).